We begin with the raw amino-acid sequence, 669 residues long: DNA ligase (669 aa).

NAD(+) is bound by residues 34–38 (DAEYD), 83–84 (SL), and E114. K116 acts as the N6-AMP-lysine intermediate in catalysis. 4 residues coordinate NAD(+): R137, E171, K287, and K311. Zn(2+)-binding residues include C405, C408, C423, and C428. One can recognise a BRCT domain in the interval 591–669 (NVESYFAGKT…EERFLQELNK (79 aa)).

This sequence belongs to the NAD-dependent DNA ligase family. LigA subfamily. Requires Mg(2+) as cofactor. The cofactor is Mn(2+).

It carries out the reaction NAD(+) + (deoxyribonucleotide)n-3'-hydroxyl + 5'-phospho-(deoxyribonucleotide)m = (deoxyribonucleotide)n+m + AMP + beta-nicotinamide D-nucleotide.. Its function is as follows. DNA ligase that catalyzes the formation of phosphodiester linkages between 5'-phosphoryl and 3'-hydroxyl groups in double-stranded DNA using NAD as a coenzyme and as the energy source for the reaction. It is essential for DNA replication and repair of damaged DNA. This chain is DNA ligase, found in Bacillus cereus (strain AH187).